Consider the following 294-residue polypeptide: Mitochondrial HMG-box protein CIM1 (294 aa).

The transit peptide at 1–90 (MKATLLLKAQ…RLYYASFCQS (90 aa)) directs the protein to the mitochondrion. The HMG-box A stretch occupies residues 27–102 (NRTPYTAFQY…IDILNVSKIE (76 aa)). Positions 110–258 (PIPAMSEYLL…IQILQKNMDI (149 aa)) are HMG-box B.

It is found in the mitochondrion matrix. In terms of biological role, mitochondrial HMG-box protein that limits the copy number of mitochondrial DNA (mtDNA), antagonizing HMG-box containing protein ABF2, a mtDNA packaging factor. The sequence is that of Mitochondrial HMG-box protein CIM1 from Saccharomyces cerevisiae (strain ATCC 204508 / S288c) (Baker's yeast).